A 274-amino-acid polypeptide reads, in one-letter code: Syntaxin-12 (274 aa).

A disordered region spans residues 1–20 (MSYGPLDMYRNPGPSGPQPR). N-acetylserine is present on S2. The Cytoplasmic segment spans residues 2 to 250 (SYGPLDMYRN…AYYQKKSRKK (249 aa)). Positions 34-80 (QRISQATAQIKNLMSQLGTKQDSSKLQENLQQFQHSTNQLAKETNEL) form a coiled coil. Residues 128-150 (EKESIARARAGSRLSAEDRQREE) are disordered. Phosphoserine occurs at positions 139, 142, 218, and 225. The t-SNARE coiled-coil homology domain occupies 178 to 240 (LELIKERETA…ERASDQLQRA (63 aa)). A helical; Anchor for type IV membrane protein transmembrane segment spans residues 251-271 (MCILVLVLSVIVTVLVVVIWV). Topologically, residues 272–274 (ASK) are vesicular.

It belongs to the syntaxin family. Associates with the BLOC-1 complex. Interacts with BLOC1S6. Interacts with NAPA and SNAP23. Identified in a complex containing STX6, STX12, VAMP4 and VTI1A. Interacts with GRIPAP1. Forms a complex with GRIP1, GRIA2 and NSG1; controls the intracellular fate of AMPAR and the endosomal sorting of the GRIA2 subunit toward recycling and membrane targeting. Interacts with NSG1. Interacts with TPC1. Interacts (via N-terminus) with VPS13B. As to expression, ubiquitous. Highly expressed in brain.

Its subcellular location is the endosome membrane. It localises to the golgi apparatus membrane. The protein resides in the endomembrane system. It is found in the early endosome membrane. The protein localises to the recycling endosome membrane. Functionally, SNARE promoting fusion of transport vesicles with target membranes. Together with SNARE STX6, promotes movement of vesicles from endosomes to the cell membrane, and may therefore function in the endocytic recycling pathway. Through complex formation with GRIP1, GRIA2 and NSG1 controls the intracellular fate of AMPAR and the endosomal sorting of the GRIA2 subunit toward recycling and membrane targeting. The polypeptide is Syntaxin-12 (Stx12) (Rattus norvegicus (Rat)).